The sequence spans 681 residues: Auxin response factor 8 (681 aa).

Positions 120–222 (FAKTLTQSDA…DLHVGIRRAK (103 aa)) form a DNA-binding region, TF-B3. Disordered stretches follow at residues 474–518 (LRRP…AKPP) and 534–577 (SLSG…TSSE). Composition is skewed to polar residues over residues 534–555 (SLSGTTSPAATGNSSLNWNTEK) and 564–577 (GVIQNSPTDNTSSE). The PB1 domain occupies 595–675 (PGQCKVFIES…RRLTILTDAG (81 aa)).

Belongs to the ARF family. As to quaternary structure, homodimers and heterodimers. Expressed in roots, culms, leaves and young panicles.

It localises to the nucleus. Auxin response factors (ARFs) are transcriptional factors that bind specifically to the DNA sequence 5'-TGTCTC-3' found in the auxin-responsive promoter elements (AuxREs). In Oryza sativa subsp. japonica (Rice), this protein is Auxin response factor 8 (ARF8).